Reading from the N-terminus, the 213-residue chain is Probable nicotinate-nucleotide adenylyltransferase (213 aa).

The protein belongs to the NadD family.

It carries out the reaction nicotinate beta-D-ribonucleotide + ATP + H(+) = deamido-NAD(+) + diphosphate. It participates in cofactor biosynthesis; NAD(+) biosynthesis; deamido-NAD(+) from nicotinate D-ribonucleotide: step 1/1. In terms of biological role, catalyzes the reversible adenylation of nicotinate mononucleotide (NaMN) to nicotinic acid adenine dinucleotide (NaAD). This Escherichia coli O17:K52:H18 (strain UMN026 / ExPEC) protein is Probable nicotinate-nucleotide adenylyltransferase.